A 255-amino-acid chain; its full sequence is Putative esterase YitV (255 aa).

This chain is Putative esterase YitV (yitV), found in Bacillus subtilis (strain 168).